The chain runs to 105 residues: Blood plasma apolipoprotein LAL1 (105 aa).

An N-terminal signal peptide occupies residues 1-21 (MKLHVAALATLAVVCILAAGS). Residues 22-29 (EAAPKAMS) constitute a propeptide that is removed on maturation.

As to expression, plasma.

Its subcellular location is the secreted. The sequence is that of Blood plasma apolipoprotein LAL1 from Petromyzon marinus (Sea lamprey).